The sequence spans 267 residues: Mannose-specific lectin 1 (267 aa).

The N-terminal stretch at 1 to 24 (MAKSLVLSSLLLALLLAAPLASLA) is a signal peptide. Bulb-type lectin domains are found at residues 26–136 (NNVL…APNR) and 150–260 (RNVL…SPAR). Intrachain disulfides connect C54–C76 and C178–C203.

As to quaternary structure, heterotetramer of 2 domain 1 and 2 domain 2 chains arranged as a dimer of domain 1/domain 2 heterodimers.

Its function is as follows. Mannose-specific lectin. Has weak agglutinating activity towards trypsin-treated erythrocytes from rabbit but not from human. This chain is Mannose-specific lectin 1, found in Crocus vernus (Dutch crocus).